Here is a 983-residue protein sequence, read N- to C-terminus: MDRKSSVTIDLLRLGVMDTDAASANHHRIAENIGADPNRLADWEHHLETCCDPDLALNVLAELAQDSAQCLGEVLDHDASACRLVRLLGASSELGRHLIAHPDDLAEVIRDPVRLGHDEICDDLLEVVGAHKEGEFTVAGTPTGPASDRLRLANRRHLVRIASRDVSADDPTEIIEDVAAELADLADGIVTAALALARADCPDHADARLAIIAMGKCGAQELNYISDVDVMYVAEPANDDVSGASAVTIATKLAASVARMCSAHSGAGSIWQVDAALRPEGNAGPLVRTMDSMRTYYEKWAKNWEFQALLKARPMAGDLDLGQRFVEMVSPMVWQVGEAEGFVPETRAMRTRVVSLIAAKNKGREIKLGAGGLRDVEFTAQLLQLVHGRQDESLRVRATLPALRALAAGGYISRGAAERLKEAYRLERVMEHRVQMFRLRRTHLLPDDEDGLRRLARAVGLRTADEVRRVWTATSKAVLRAHGQVFYSPVVEAVARIPTQDLRMSAEAAKVRLSALGFHDEDAGLRHIEALTSGTSRAVRIQTALMPAMLAWLADGPSPDHGLLAFRQVSEALGESPWYLRALRDEGAMAQRLAVVLSTSRYAVDVLTRAPETVQVLVDDDLTPLSREDLARQMNAVARRHHDVEEAVGAIRAVRRRKLFRILVADILNVTGIRRIGQALTDLTGATIDAALTAVSREVEDAPPIGIVAMGRWGGQELSYASDADCLFVVGDGPGVGEKALKIVTKLRNLLGKHGADPAVVLDADLRPEGRSGPMVRSLESYRKYYGKWSSTWESQALLRASHGAGDRELTNELLEYVDQVRYPADGLTGSQLAEIRKLKARMESERIPRGVDPRRHLKLGPGGLSDIEWTAQIIQLQHAGHDPALRTTSTIDALNAALAAGYIDEGQHAKLCDSWLAASRLRNAIMVVRGRPSDVIPSDSTDLDVIAKASGMGQGASEHLVEDHLRHCRRASRVVDAVFWNQ.

Residues 1–490 (MDRKSSVTID…AHGQVFYSPV (490 aa)) are adenylyl removase. The interval 496 to 983 (RIPTQDLRMS…RVVDAVFWNQ (488 aa)) is adenylyl transferase.

This sequence belongs to the GlnE family. The cofactor is Mg(2+).

The catalysed reaction is [glutamine synthetase]-O(4)-(5'-adenylyl)-L-tyrosine + phosphate = [glutamine synthetase]-L-tyrosine + ADP. It carries out the reaction [glutamine synthetase]-L-tyrosine + ATP = [glutamine synthetase]-O(4)-(5'-adenylyl)-L-tyrosine + diphosphate. Its function is as follows. Involved in the regulation of glutamine synthetase GlnA, a key enzyme in the process to assimilate ammonia. When cellular nitrogen levels are high, the C-terminal adenylyl transferase (AT) inactivates GlnA by covalent transfer of an adenylyl group from ATP to specific tyrosine residue of GlnA, thus reducing its activity. Conversely, when nitrogen levels are low, the N-terminal adenylyl removase (AR) activates GlnA by removing the adenylyl group by phosphorolysis, increasing its activity. The regulatory region of GlnE binds the signal transduction protein PII (GlnB) which indicates the nitrogen status of the cell. The protein is Bifunctional glutamine synthetase adenylyltransferase/adenylyl-removing enzyme of Cutibacterium acnes (strain DSM 16379 / KPA171202) (Propionibacterium acnes).